The chain runs to 543 residues: Chaperonin GroEL (543 aa).

ATP-binding positions include 30 to 33 (TLGP), Lys-51, 87 to 91 (DGTTT), Gly-415, 479 to 481 (NAA), and Asp-495.

Belongs to the chaperonin (HSP60) family. In terms of assembly, forms a cylinder of 14 subunits composed of two heptameric rings stacked back-to-back. Interacts with the co-chaperonin GroES.

The protein resides in the cytoplasm. It carries out the reaction ATP + H2O + a folded polypeptide = ADP + phosphate + an unfolded polypeptide.. Its function is as follows. Together with its co-chaperonin GroES, plays an essential role in assisting protein folding. The GroEL-GroES system forms a nano-cage that allows encapsulation of the non-native substrate proteins and provides a physical environment optimized to promote and accelerate protein folding. The sequence is that of Chaperonin GroEL from Francisella philomiragia subsp. philomiragia (strain ATCC 25017 / CCUG 19701 / FSC 153 / O#319-036).